A 1868-amino-acid polypeptide reads, in one-letter code: Inactive histone-lysine N-methyltransferase 2E (1868 aa).

The short motif at 63-66 (DHNY) is the HCFC1-binding motif (HBM) element. The PHD-type zinc-finger motif lies at 118 to 166 (VTRCICGFTHDDGYMICCDKCSVWQHIDCMGIDRQHIPDTYLCERCQPR). C121, C123, C135, C138, H143, C146, C160, and C163 together coordinate Zn(2+). 3 disordered regions span residues 178–197 (RRKRENMSDGDTSATESGDE), 217–268 (ASRV…SSDS), and 308–329 (GSGNDSKDMNKSELSTNNSLFR). The SET domain maps to 330–447 (PPVESHIQKN…KGTEITIAFD (118 aa)). S435 carries an O-linked (GlcNAc) serine glycan. Residue T440 is glycosylated (O-linked (GlcNAc) threonine). The disordered stretch occupies residues 472–504 (KRSSESTENINSGYETRRKKGKKEKDTSKEKDI). Positions 494-504 (KEKDTSKEKDI) are enriched in basic and acidic residues. Positions 559 to 613 (VEMESEEQIAERKRKMTREERKMEAILQAFARLEKREKRREQALERISTAKTEVK) form a coiled coil. The span at 646–670 (NRTKQRKSFSRSRTHIGQQRRRHRT) shows a compositional bias: basic residues. The interval 646-682 (NRTKQRKSFSRSRTHIGQQRRRHRTVSMCSDIPPSSP) is disordered. S837 and S845 each carry phosphoserine. The segment covering 884 to 908 (YSESSTPTPSPYATPTHTDITPTDP) has biased composition (low complexity). 2 disordered regions span residues 884–924 (YSES…ETYR) and 1038–1068 (SMETPAHDRTEPSNQLDSTHSGRGTMYSSWV). The span at 1049 to 1068 (PSNQLDSTHSGRGTMYSSWV) shows a compositional bias: polar residues. S1070 carries the phosphoserine modification. Disordered stretches follow at residues 1165 to 1222 (KRQR…PPPA), 1236 to 1315 (SSEE…SNHI), 1334 to 1565 (PDAE…QNQQ), and 1585 to 1842 (VFTS…QASP). The span at 1184 to 1197 (SVSPHPSGSLSSSG) shows a compositional bias: low complexity. Positions 1203–1213 (SSENGEQAENQ) are enriched in polar residues. S1282 bears the Phosphoserine mark. Residues 1282–1291 (SDHRKDKDSG) show a composition bias toward basic and acidic residues. 2 stretches are compositionally biased toward low complexity: residues 1294 to 1312 (SPCVSCSPSHVQSPPSSHS) and 1348 to 1363 (PSPDTSQSPSKTSKPG). S1364 bears the Phosphoserine mark. Composition is skewed to polar residues over residues 1389–1421 (ATVSEADNSVHQNPEPQHRQLSSNTPALSQNHA), 1451–1463 (HTENPPKSSTPHT), and 1488–1498 (SQSPQVGTPQR). Positions 1506–1518 (AAAQNLQANPQQA) are enriched in low complexity. Polar residues predominate over residues 1519 to 1547 (TSGALFTQTPSGQSSATYSQFNQQSLNST). The span at 1548-1558 (APPPPPPPPPS) shows a compositional bias: pro residues. Residues 1585-1603 (VFTSGPNQALPGSTSQQSV) show a composition bias toward polar residues. Residues 1631–1642 (VPPPPPPPPAPG) are compositionally biased toward pro residues. Over residues 1647–1656 (QQPSSHQQHS) the composition is skewed to polar residues. The span at 1682–1692 (LPPPPPPPGPA) shows a compositional bias: pro residues. Residues 1706–1716 (QSLQAQHQHVV) show a composition bias toward polar residues. Positions 1719 to 1732 (APPPPPPPPPPPPA) are enriched in pro residues. Residues 1806–1816 (QGPNSIPTPTA) show a composition bias toward polar residues.

The protein belongs to the class V-like SAM-binding methyltransferase superfamily. Histone-lysine methyltransferase family. TRX/MLL subfamily. In terms of assembly, component of a complex composed of KMT2E, OGT and USP7; the complex stabilizes KMT2E, preventing KMT2E ubiquitination and proteasomal-mediated degradation. Interacts (via N-terminus) with OGT (via TRP repeats). Interacts with deubiquitinating enzyme USP7 (via MATH domain). Interacts (via HBM motif) with HCFC1 (via Kelch domain). Interacts with E2F1; the interaction is probably indirect and is mediated via HCFC1. Post-translationally, ubiquitinated. Deubiquitinated by USP7. In terms of processing, O-glycosylated at Ser-435 and Thr-440 in the SET domain by OGT which probably prevents KMT2E proteasomal-mediated degradation.

It is found in the chromosome. Its subcellular location is the cytoplasm. It localises to the cytoskeleton. The protein resides in the microtubule organizing center. The protein localises to the centrosome. It is found in the nucleus speckle. Its function is as follows. Associates with chromatin regions downstream of transcriptional start sites of active genes and thus regulates gene transcription. Chromatin interaction is mediated via the binding to tri-methylated histone H3 at 'Lys-4' (H3K4me3). Key regulator of hematopoiesis involved in terminal myeloid differentiation and in the regulation of hematopoietic stem cell (HSCs) self-renewal by a mechanism that involves DNA methylation. Also acts as an important cell cycle regulator, participating in cell cycle regulatory network machinery at multiple cell cycle stages including G1/S transition, S phase progression and mitotic entry. Recruited to E2F1 responsive promoters by HCFC1 where it stimulates tri-methylation of histone H3 at 'Lys-4' and transcriptional activation and thereby facilitates G1 to S phase transition. During myoblast differentiation, required to suppress inappropriate expression of S-phase-promoting genes and maintain expression of determination genes in quiescent cells. The chain is Inactive histone-lysine N-methyltransferase 2E (Kmt2e) from Mus musculus (Mouse).